A 544-amino-acid polypeptide reads, in one-letter code: Chaperonin GroEL (544 aa).

Residues 30–33 (TLGP), lysine 51, 87–91 (DGTTT), glycine 415, 481–483 (DAL), and aspartate 497 contribute to the ATP site.

The protein belongs to the chaperonin (HSP60) family. Forms a cylinder of 14 subunits composed of two heptameric rings stacked back-to-back. Interacts with the co-chaperonin GroES.

The protein resides in the cytoplasm. It carries out the reaction ATP + H2O + a folded polypeptide = ADP + phosphate + an unfolded polypeptide.. Functionally, together with its co-chaperonin GroES, plays an essential role in assisting protein folding. The GroEL-GroES system forms a nano-cage that allows encapsulation of the non-native substrate proteins and provides a physical environment optimized to promote and accelerate protein folding. This is Chaperonin GroEL from Chlamydia trachomatis serovar L2 (strain ATCC VR-902B / DSM 19102 / 434/Bu).